The sequence spans 213 residues: GAIDSKLDWSHNFTNMLGYTEPQFTELMRLYLTIHSDHEGGNVSAHTSHLVGSALSDPYLSFAAAMNGLAGPLHGLANQEVLVWLTQLQKEVGKDVSDEKLRDYIWNTLNSGRVVPGYGHAVLRKTDPRYSCQREFALKHLPNDPLFKLVAQLYKIVPNILLEQGKAKNPWPNVDAHSGVLLQYYGMTEMNYYTVLFGVSRALGVLAQLIWSR.

His-74 is a catalytic residue. Lys-94 and Lys-100 each carry N6-acetyllysine; alternate. Lys-94 and Lys-100 each carry N6-succinyllysine; alternate. The active site involves His-120. Arg-129 provides a ligand contact to oxaloacetate. At Lys-148 the chain carries N6-acetyllysine; alternate. At Lys-148 the chain carries N6-succinyllysine; alternate. Lys-155 is modified (N6-acetyllysine). Lys-166 is modified (N6-acetyllysine; alternate). The residue at position 166 (Lys-166) is an N6-succinyllysine; alternate. The residue at position 168 (Lys-168) is an N6,N6,N6-trimethyllysine. Asp-175 is a catalytic residue. Arg-201 contributes to the oxaloacetate binding site.

It belongs to the citrate synthase family. Homodimer. In terms of processing, in response to mitochondrial stress, the precursor protein is ubiquitinated by the SIFI complex in the cytoplasm before mitochondrial import, leading to its degradation. Within the SIFI complex, UBR4 initiates ubiquitin chain that are further elongated or branched by KCMF1.

It is found in the mitochondrion matrix. The catalysed reaction is oxaloacetate + acetyl-CoA + H2O = citrate + CoA + H(+). The protein operates within carbohydrate metabolism; tricarboxylic acid cycle; isocitrate from oxaloacetate: step 1/2. Its function is as follows. Key enzyme of the Krebs tricarboxylic acid cycle which catalyzes the synthesis of citrate from acetyl coenzyme A and oxaloacetate. In Mesocricetus auratus (Golden hamster), this protein is Citrate synthase, mitochondrial.